A 207-amino-acid chain; its full sequence is MQNFKELNEKIAWQKVDNLLPVIIQDAKTCEVLMLGFMNNEALEKSLESGKVVFFSRTKQRLWMKGEESGNFLNIIDLSLDCDNDTLLILANPVGPTCHTGDISCFEKISKNADFVFLARLEKLINARKNADENTSYTAKLFKSGTKRIAQKVGEEGVETALAATVKDKEELICEAADLMYHLSVLLADANLSFSDVISKLKERHKA.

The phosphoribosyl-AMP cyclohydrolase stretch occupies residues 1 to 117; sequence MQNFKELNEK…KISKNADFVF (117 aa). Positions 118-207 are phosphoribosyl-ATP pyrophosphohydrolase; it reads LARLEKLINA…ISKLKERHKA (90 aa).

In the N-terminal section; belongs to the PRA-CH family. The protein in the C-terminal section; belongs to the PRA-PH family.

The protein localises to the cytoplasm. The enzyme catalyses 1-(5-phospho-beta-D-ribosyl)-ATP + H2O = 1-(5-phospho-beta-D-ribosyl)-5'-AMP + diphosphate + H(+). The catalysed reaction is 1-(5-phospho-beta-D-ribosyl)-5'-AMP + H2O = 1-(5-phospho-beta-D-ribosyl)-5-[(5-phospho-beta-D-ribosylamino)methylideneamino]imidazole-4-carboxamide. Its pathway is amino-acid biosynthesis; L-histidine biosynthesis; L-histidine from 5-phospho-alpha-D-ribose 1-diphosphate: step 2/9. It participates in amino-acid biosynthesis; L-histidine biosynthesis; L-histidine from 5-phospho-alpha-D-ribose 1-diphosphate: step 3/9. This chain is Histidine biosynthesis bifunctional protein HisIE (hisI), found in Campylobacter jejuni subsp. jejuni serotype O:2 (strain ATCC 700819 / NCTC 11168).